The chain runs to 43 residues: Neurotrophin-3 (43 aa).

This sequence belongs to the NGF-beta family.

Its subcellular location is the secreted. Seems to promote the survival of visceral and proprioceptive sensory neurons. This is Neurotrophin-3 (ntf3) from Raja clavata (Thornback ray).